The sequence spans 258 residues: Tritrans,polycis-undecaprenyl-diphosphate synthase (geranylgeranyl-diphosphate specific) (258 aa).

Asp37 is a catalytic residue. Asp37 provides a ligand contact to Mg(2+). Substrate contacts are provided by residues 38 to 41 (GNRR), His54, and 82 to 84 (STE). Asn85 functions as the Proton acceptor in the catalytic mechanism. Residues Phe86, Arg88, Arg207, and 213–215 (RIS) contribute to the substrate site. Glu226 serves as a coordination point for Mg(2+).

It belongs to the UPP synthase family. In terms of assembly, homodimer. It depends on Mg(2+) as a cofactor.

The enzyme catalyses geranylgeranyl diphosphate + 7 isopentenyl diphosphate = tri-trans,hepta-cis-undecaprenyl diphosphate + 7 diphosphate. Functionally, catalyzes the sequential condensation of isopentenyl diphosphate (IPP) with geranylgeranyl diphosphate (GGPP) to yield (2Z,6Z,10Z,14Z,18Z,22Z,26Z,30E,34E,38E)-undecaprenyl diphosphate (tritrans,heptacis-UPP). It is probably the precursor of glycosyl carrier lipids. This Thermoplasma acidophilum (strain ATCC 25905 / DSM 1728 / JCM 9062 / NBRC 15155 / AMRC-C165) protein is Tritrans,polycis-undecaprenyl-diphosphate synthase (geranylgeranyl-diphosphate specific).